Reading from the N-terminus, the 578-residue chain is Proline--tRNA ligase (578 aa).

The protein belongs to the class-II aminoacyl-tRNA synthetase family. ProS type 1 subfamily. In terms of assembly, homodimer.

It localises to the cytoplasm. It catalyses the reaction tRNA(Pro) + L-proline + ATP = L-prolyl-tRNA(Pro) + AMP + diphosphate. In terms of biological role, catalyzes the attachment of proline to tRNA(Pro) in a two-step reaction: proline is first activated by ATP to form Pro-AMP and then transferred to the acceptor end of tRNA(Pro). As ProRS can inadvertently accommodate and process non-cognate amino acids such as alanine and cysteine, to avoid such errors it has two additional distinct editing activities against alanine. One activity is designated as 'pretransfer' editing and involves the tRNA(Pro)-independent hydrolysis of activated Ala-AMP. The other activity is designated 'posttransfer' editing and involves deacylation of mischarged Ala-tRNA(Pro). The misacylated Cys-tRNA(Pro) is not edited by ProRS. The sequence is that of Proline--tRNA ligase from Burkholderia pseudomallei (strain K96243).